We begin with the raw amino-acid sequence, 604 residues long: Elongation factor 4 (604 aa).

The tr-type G domain occupies 2–184 (DHIRNFSIIA…AVITRMPAPR (183 aa)). Residues 14 to 19 (DHGKST) and 131 to 134 (NKMD) contribute to the GTP site.

Belongs to the TRAFAC class translation factor GTPase superfamily. Classic translation factor GTPase family. LepA subfamily.

Its subcellular location is the cell inner membrane. The enzyme catalyses GTP + H2O = GDP + phosphate + H(+). Its function is as follows. Required for accurate and efficient protein synthesis under certain stress conditions. May act as a fidelity factor of the translation reaction, by catalyzing a one-codon backward translocation of tRNAs on improperly translocated ribosomes. Back-translocation proceeds from a post-translocation (POST) complex to a pre-translocation (PRE) complex, thus giving elongation factor G a second chance to translocate the tRNAs correctly. Binds to ribosomes in a GTP-dependent manner. This is Elongation factor 4 from Methylibium petroleiphilum (strain ATCC BAA-1232 / LMG 22953 / PM1).